The following is a 209-amino-acid chain: Small ribosomal subunit protein uS4 (209 aa).

The segment covering 1-13 (MSTKSRTRSKTRL) has biased composition (basic residues). Disordered stretches follow at residues 1–20 (MSTK…LGIP) and 28–49 (YLEK…QDSD). The 82-residue stretch at 95-176 (QRLDALVVRS…PKLPSYLEVE (82 aa)) folds into the S4 RNA-binding domain.

This sequence belongs to the universal ribosomal protein uS4 family. In terms of assembly, part of the 30S ribosomal subunit. Contacts protein S5. The interaction surface between S4 and S5 is involved in control of translational fidelity.

Functionally, one of the primary rRNA binding proteins, it binds directly to 16S rRNA where it nucleates assembly of the body of the 30S subunit. With S5 and S12 plays an important role in translational accuracy. The polypeptide is Small ribosomal subunit protein uS4 (Clavibacter michiganensis subsp. michiganensis (strain NCPPB 382)).